The primary structure comprises 386 residues: Dual-specificity RNA methyltransferase RlmN (386 aa).

Residue glutamate 94 is the Proton acceptor of the active site. Residues glutamate 100–aspartate 341 form the Radical SAM core domain. Cysteine 107 and cysteine 347 are joined by a disulfide. Positions 114, 118, and 121 each coordinate [4Fe-4S] cluster. S-adenosyl-L-methionine contacts are provided by residues glycine 173–glutamate 174, serine 205, serine 227–histidine 229, and asparagine 304. The active-site S-methylcysteine intermediate is cysteine 347.

It belongs to the radical SAM superfamily. RlmN family. [4Fe-4S] cluster is required as a cofactor.

The protein resides in the cytoplasm. The enzyme catalyses adenosine(2503) in 23S rRNA + 2 reduced [2Fe-2S]-[ferredoxin] + 2 S-adenosyl-L-methionine = 2-methyladenosine(2503) in 23S rRNA + 5'-deoxyadenosine + L-methionine + 2 oxidized [2Fe-2S]-[ferredoxin] + S-adenosyl-L-homocysteine. The catalysed reaction is adenosine(37) in tRNA + 2 reduced [2Fe-2S]-[ferredoxin] + 2 S-adenosyl-L-methionine = 2-methyladenosine(37) in tRNA + 5'-deoxyadenosine + L-methionine + 2 oxidized [2Fe-2S]-[ferredoxin] + S-adenosyl-L-homocysteine. Specifically methylates position 2 of adenine 2503 in 23S rRNA and position 2 of adenine 37 in tRNAs. m2A2503 modification seems to play a crucial role in the proofreading step occurring at the peptidyl transferase center and thus would serve to optimize ribosomal fidelity. The chain is Dual-specificity RNA methyltransferase RlmN from Herminiimonas arsenicoxydans.